The following is a 229-amino-acid chain: Triosephosphate isomerase (229 aa).

6–8 (NLK) lines the substrate pocket. Histidine 85 serves as the catalytic Electrophile. Catalysis depends on glutamate 152, which acts as the Proton acceptor. Substrate contacts are provided by glycine 158 and serine 188.

This sequence belongs to the triosephosphate isomerase family. As to quaternary structure, homodimer.

The protein localises to the cytoplasm. It catalyses the reaction D-glyceraldehyde 3-phosphate = dihydroxyacetone phosphate. The protein operates within carbohydrate biosynthesis; gluconeogenesis. Its pathway is carbohydrate degradation; glycolysis; D-glyceraldehyde 3-phosphate from glycerone phosphate: step 1/1. In terms of biological role, involved in the gluconeogenesis. Catalyzes stereospecifically the conversion of dihydroxyacetone phosphate (DHAP) to D-glyceraldehyde-3-phosphate (G3P). The sequence is that of Triosephosphate isomerase from Campylobacter curvus (strain 525.92).